Reading from the N-terminus, the 437-residue chain is Zinc finger CCCH domain-containing protein 40 (437 aa).

The segment at 6 to 33 (MYKTKLCILFNKTGDCSRPNCTFAHGNA) adopts a C3H1-type zinc-finger fold. Positions 35–107 (LRRPGESSFT…MPFENRRDKD (73 aa)) are disordered. Positions 48–85 (HNMDSDLRDRRHNMDSDLRDRLGRQFSPERRPSLDRSG) are enriched in basic and acidic residues. A coiled-coil region spans residues 145 to 244 (NNVLEEQLKD…LGNQLSTYLA (100 aa)). Ser-259 carries the post-translational modification Phosphoserine. 2 disordered regions span residues 266-360 (RNLR…RRRF) and 380-437 (EFDD…DDSV). Residues 307–319 (RGEEEKVENEKKR) are compositionally biased toward basic and acidic residues. Acidic residues-rich tracts occupy residues 333–343 (EEESGAWNDED) and 383–392 (DVAESEEENP). Over residues 426–437 (MEQKKAYDDDSV) the composition is skewed to basic and acidic residues.

In Arabidopsis thaliana (Mouse-ear cress), this protein is Zinc finger CCCH domain-containing protein 40.